A 178-amino-acid polypeptide reads, in one-letter code: ATP-dependent protease subunit HslV (178 aa).

Residue Thr7 is part of the active site. Gly162, Cys165, and Thr168 together coordinate Na(+).

Belongs to the peptidase T1B family. HslV subfamily. As to quaternary structure, a double ring-shaped homohexamer of HslV is capped on each side by a ring-shaped HslU homohexamer. The assembly of the HslU/HslV complex is dependent on binding of ATP.

It localises to the cytoplasm. The enzyme catalyses ATP-dependent cleavage of peptide bonds with broad specificity.. With respect to regulation, allosterically activated by HslU binding. Its function is as follows. Protease subunit of a proteasome-like degradation complex believed to be a general protein degrading machinery. The sequence is that of ATP-dependent protease subunit HslV from Sulfurihydrogenibium sp. (strain YO3AOP1).